We begin with the raw amino-acid sequence, 209 residues long: Small ribosomal subunit protein uS4 (209 aa).

Residues 98–166 form the S4 RNA-binding domain; that stretch reads RRLDNVVYRL…IKQAIELNKG (69 aa).

The protein belongs to the universal ribosomal protein uS4 family. As to quaternary structure, part of the 30S ribosomal subunit. Contacts protein S5. The interaction surface between S4 and S5 is involved in control of translational fidelity.

One of the primary rRNA binding proteins, it binds directly to 16S rRNA where it nucleates assembly of the body of the 30S subunit. In terms of biological role, with S5 and S12 plays an important role in translational accuracy. This Fervidobacterium nodosum (strain ATCC 35602 / DSM 5306 / Rt17-B1) protein is Small ribosomal subunit protein uS4.